A 265-amino-acid polypeptide reads, in one-letter code: Seminal vesicle secretory protein 3A (265 aa).

The first 20 residues, M1–G20, serve as a signal peptide directing secretion. Repeat copies occupy residues Q116–S119, Q122–S125, Q129–S132, Q136–T139, and Q142–S145. The segment at Q116–S145 is 5 X 4 AA tandem repeats of Q-X-K-[ST].

Post-translationally, glycosylated. In terms of processing, covalently cross-linked by transglutaminase, which is important for the formation of the gelatinous copulatory plug. Five repeats of Q-X-K-(S/T) in the central region of the protein serve as the transglutaminase substrate site(s). As to expression, highly expressed in the seminal vesicle where it is detected in luminal epithelium of the mucosa folds, and also in luminal fluid (at protein level). Not detected in other tissues tested.

It is found in the secreted. Functionally, component of the copulatory plug. The protein is Seminal vesicle secretory protein 3A of Mus musculus (Mouse).